Consider the following 38-residue polypeptide: MVSQNPNRQKVELNRTSLFWGLLLIFVLAILFSSYIFN.

The helical transmembrane segment at 17-37 (SLFWGLLLIFVLAILFSSYIF) threads the bilayer.

Belongs to the PsbL family. In terms of assembly, PSII is composed of 1 copy each of membrane proteins PsbA, PsbB, PsbC, PsbD, PsbE, PsbF, PsbH, PsbI, PsbJ, PsbK, PsbL, PsbM, PsbT, PsbX, PsbY, PsbZ, Psb30/Ycf12, at least 3 peripheral proteins of the oxygen-evolving complex and a large number of cofactors. It forms dimeric complexes.

It is found in the plastid. Its subcellular location is the cyanelle thylakoid membrane. In terms of biological role, one of the components of the core complex of photosystem II (PSII). PSII is a light-driven water:plastoquinone oxidoreductase that uses light energy to abstract electrons from H(2)O, generating O(2) and a proton gradient subsequently used for ATP formation. It consists of a core antenna complex that captures photons, and an electron transfer chain that converts photonic excitation into a charge separation. This subunit is found at the monomer-monomer interface and is required for correct PSII assembly and/or dimerization. The chain is Photosystem II reaction center protein L from Cyanophora paradoxa.